Reading from the N-terminus, the 298-residue chain is MEEKQILCVGLVVLDVISLVDKYPKEDSEIRCLSQRWQRGGNASNSCTVLSLLGAPCAFMGSMAPGHVADFLVADFRRRGVDVSQVAWQSKGDTPSSCCIINNSNGNRTIVLHDTSLPDVSATDFEKVDLTQFKWIHIEGRNASEQVKMLQRIDAHNTRQPPEQKIRVSVEVEKPREELFQLFGYGDVVFVSKDVAKHLGFQSAEEALRGLYGRVRKGAVLVCAWAEEGADALGPDGKLLHSDAFPPPRVVDTLGAGDTFNASVIFSLSQGRSVQEALRFGCQVAGKKCGLQGFDGIV.

Beta-D-fructose is bound by residues Asp-15, Gly-41, Asn-42, and Asn-45. Residues Arg-108, 226–229 (AEEG), and 255–258 (GAGD) contribute to the ATP site. A beta-D-fructose-binding site is contributed by Asp-258.

It belongs to the carbohydrate kinase PfkB family. As to quaternary structure, homodimer. In terms of tissue distribution, most abundant in liver, kidney, gut, spleen and pancreas. Low levels also found in adrenal, muscle, brain and eye.

It catalyses the reaction beta-D-fructose + ATP = beta-D-fructose 1-phosphate + ADP + H(+). It participates in carbohydrate metabolism; fructose metabolism. With respect to regulation, requires potassium. Inhibition by ADP. Its function is as follows. Catalyzes the phosphorylation of the ketose sugar fructose to fructose-1-phosphate. This Homo sapiens (Human) protein is Ketohexokinase.